The sequence spans 399 residues: Argininosuccinate synthase (399 aa).

ATP is bound at residue 8–16 (AYSGGLDTS). Tyrosine 87 lines the L-citrulline pocket. Glycine 117 is a binding site for ATP. 3 residues coordinate L-aspartate: threonine 119, asparagine 123, and aspartate 124. Asparagine 123 contributes to the L-citrulline binding site. The L-citrulline site is built by arginine 127, serine 175, glutamate 259, and tyrosine 271.

It belongs to the argininosuccinate synthase family. Type 1 subfamily. As to quaternary structure, homotetramer.

It is found in the cytoplasm. It catalyses the reaction L-citrulline + L-aspartate + ATP = 2-(N(omega)-L-arginino)succinate + AMP + diphosphate + H(+). Its pathway is amino-acid biosynthesis; L-arginine biosynthesis; L-arginine from L-ornithine and carbamoyl phosphate: step 2/3. This is Argininosuccinate synthase from Corynebacterium diphtheriae (strain ATCC 700971 / NCTC 13129 / Biotype gravis).